The chain runs to 860 residues: Leucine--tRNA ligase (860 aa).

Positions 42 to 52 (PYPSGRLHMGH) match the 'HIGH' region motif. Residues 619–623 (KMSKS) carry the 'KMSKS' region motif. Lysine 622 is an ATP binding site.

Belongs to the class-I aminoacyl-tRNA synthetase family.

It is found in the cytoplasm. It carries out the reaction tRNA(Leu) + L-leucine + ATP = L-leucyl-tRNA(Leu) + AMP + diphosphate. This is Leucine--tRNA ligase from Citrobacter koseri (strain ATCC BAA-895 / CDC 4225-83 / SGSC4696).